Consider the following 548-residue polypeptide: Internalin H (548 aa).

The first 30 residues, 1 to 30, serve as a signal peptide directing secretion; sequence MKKRWNSVFKLVLMVTAILGLSLYVTTSQG. LRR repeat units lie at residues 93–105, 113–127, 135–149, 157–171, 179–193, 201–215, and 223–236; these read GVQY…GLEL, LTPL…ELEL, VSAI…TLDL, VTPL…VLYL, ISPL…YLSI, LTPL…TLKA, and ISPL…IEVH. A disordered region spans residues 480-518; that stretch reads FTKNDNPNPDDPTTNTPTGNGDGTSNPSNSGGNTTLPTA. Over residues 483 to 498 the composition is skewed to low complexity; the sequence is NDNPNPDDPTTNTPTG. Over residues 504–516 the composition is skewed to polar residues; sequence SNPSNSGGNTTLP. The LPXTG sorting signal signature appears at 515–519; the sequence is LPTAG. A518 carries the pentaglycyl murein peptidoglycan amidated alanine modification. A propeptide spans 519–548 (removed by sortase A); that stretch reads GDENTMLPIFIGVFLLGTATLILRKTIKVK.

This sequence belongs to the internalin family.

It localises to the secreted. The protein resides in the cell wall. In terms of biological role, contributes to systemic listeriosis in mice by decreasing host IL-6 cytokine production and thus evasion of the host immune response. Does not contribute to invasion of the host intestinal tissue. The chain is Internalin H (inlH) from Listeria monocytogenes serovar 1/2a (strain ATCC BAA-679 / EGD-e).